A 357-amino-acid chain; its full sequence is UDP-N-acetylglucosamine--N-acetylmuramyl-(pentapeptide) pyrophosphoryl-undecaprenol N-acetylglucosamine transferase (357 aa).

Residues 14-16 (TGG), Asn126, Arg162, Ser190, Ile246, 265-270 (ALTVCE), and Gln290 contribute to the UDP-N-acetyl-alpha-D-glucosamine site.

It belongs to the glycosyltransferase 28 family. MurG subfamily.

The protein resides in the cell inner membrane. It carries out the reaction di-trans,octa-cis-undecaprenyl diphospho-N-acetyl-alpha-D-muramoyl-L-alanyl-D-glutamyl-meso-2,6-diaminopimeloyl-D-alanyl-D-alanine + UDP-N-acetyl-alpha-D-glucosamine = di-trans,octa-cis-undecaprenyl diphospho-[N-acetyl-alpha-D-glucosaminyl-(1-&gt;4)]-N-acetyl-alpha-D-muramoyl-L-alanyl-D-glutamyl-meso-2,6-diaminopimeloyl-D-alanyl-D-alanine + UDP + H(+). It participates in cell wall biogenesis; peptidoglycan biosynthesis. Cell wall formation. Catalyzes the transfer of a GlcNAc subunit on undecaprenyl-pyrophosphoryl-MurNAc-pentapeptide (lipid intermediate I) to form undecaprenyl-pyrophosphoryl-MurNAc-(pentapeptide)GlcNAc (lipid intermediate II). In Histophilus somni (strain 129Pt) (Haemophilus somnus), this protein is UDP-N-acetylglucosamine--N-acetylmuramyl-(pentapeptide) pyrophosphoryl-undecaprenol N-acetylglucosamine transferase.